The following is a 373-amino-acid chain: Erythronate-4-phosphate dehydrogenase (373 aa).

The substrate site is built by Ser45 and Thr67. NAD(+) contacts are provided by residues Asp147, 206–208 (ASR), and Asp232. Residue Arg208 is part of the active site. Glu237 is a catalytic residue. His254 acts as the Proton donor in catalysis. Gly257 provides a ligand contact to NAD(+). Tyr258 is a binding site for substrate.

Belongs to the D-isomer specific 2-hydroxyacid dehydrogenase family. PdxB subfamily. As to quaternary structure, homodimer.

It localises to the cytoplasm. It carries out the reaction 4-phospho-D-erythronate + NAD(+) = (R)-3-hydroxy-2-oxo-4-phosphooxybutanoate + NADH + H(+). It participates in cofactor biosynthesis; pyridoxine 5'-phosphate biosynthesis; pyridoxine 5'-phosphate from D-erythrose 4-phosphate: step 2/5. Its function is as follows. Catalyzes the oxidation of erythronate-4-phosphate to 3-hydroxy-2-oxo-4-phosphonooxybutanoate. The polypeptide is Erythronate-4-phosphate dehydrogenase (Tolumonas auensis (strain DSM 9187 / NBRC 110442 / TA 4)).